The chain runs to 508 residues: Hydroxymethylglutaryl-CoA synthase, mitochondrial (508 aa).

The transit peptide at 1 to 37 (MQRLLTPVRQVLRVKRAMQEASFMPPLLPPAAHQRFS) directs the protein to the mitochondrion. K52 carries the N6-succinyllysine modification. (3S)-3-hydroxy-3-methylglutaryl-CoA contacts are provided by E80 and A81. E132 serves as the catalytic Proton donor/acceptor. 3 residues coordinate (3S)-3-hydroxy-3-methylglutaryl-CoA: C166, N204, and T208. The active-site Acyl-thioester intermediate is C166. N6-acetyllysine is present on K243. K256 is modified (N6-acetyllysine; alternate). K256 carries the post-translational modification N6-succinyllysine; alternate. Residues S258 and H301 each coordinate (3S)-3-hydroxy-3-methylglutaryl-CoA. H301 functions as the Proton donor/acceptor in the catalytic mechanism. K306 bears the N6-acetyllysine mark. A (3S)-3-hydroxy-3-methylglutaryl-CoA-binding site is contributed by K310. Residue K310 is modified to N6-acetyllysine; alternate. Position 310 is an N6-succinyllysine; alternate (K310). K333 is subject to N6-succinyllysine. Residues K342, K350, K354, and K358 each carry the N6-acetyllysine; alternate modification. An N6-succinyllysine; alternate mark is found at K342, K350, K354, and K358. Residues N380 and S414 each contribute to the (3S)-3-hydroxy-3-methylglutaryl-CoA site. S433 bears the Phosphoserine mark. N6-acetyllysine is present on K437. 2 positions are modified to phosphoserine: S440 and S456. K473 is modified (N6-acetyllysine; alternate). K473 carries the post-translational modification N6-succinyllysine; alternate.

Belongs to the thiolase-like superfamily. HMG-CoA synthase family. In terms of assembly, homodimer. Post-translationally, succinylated. Desuccinylated by SIRT5. Succinylation, at least at Lys-310, inhibits the enzymatic activity.

It localises to the mitochondrion. It carries out the reaction acetoacetyl-CoA + acetyl-CoA + H2O = (3S)-3-hydroxy-3-methylglutaryl-CoA + CoA + H(+). It functions in the pathway metabolic intermediate biosynthesis; (R)-mevalonate biosynthesis; (R)-mevalonate from acetyl-CoA: step 2/3. In terms of biological role, catalyzes the first irreversible step in ketogenesis, condensing acetyl-CoA to acetoacetyl-CoA to form HMG-CoA, which is converted by HMG-CoA reductase (HMGCR) into mevalonate. The chain is Hydroxymethylglutaryl-CoA synthase, mitochondrial (HMGCS2) from Sus scrofa (Pig).